Here is a 170-residue protein sequence, read N- to C-terminus: Viral interleukin-10 homolog (170 aa).

Positions 1 to 23 (MERRLVVTLQCLVLLYLAPECGG) are cleaved as a signal peptide. 2 disulfide bridges follow: C27/C119 and C73/C125. The stretch at 97 to 145 (EAKDHVNSLGENLKTLRLRLRRCHRFLPCENKSKAVEQIKNAFNKLQEK) forms a coiled coil. A glycan (N-linked (GlcNAc...) asparagine; by host) is linked at N127.

Belongs to the IL-10 family. Homodimer.

Its subcellular location is the secreted. Its function is as follows. Inhibits IFN-gamma synthesis. Down-regulates the expression of the host TAP1 gene (transporter associated with antigen processing), thereby affecting the transport of peptides into the endoplasmic reticulum and subsequent peptide loading by MHC class I molecules. In consequence, infected cells are masked for immune recognition by cytotoxic T-lymphocytes. The sequence is that of Viral interleukin-10 homolog from Epstein-Barr virus (strain AG876) (HHV-4).